The following is a 306-amino-acid chain: Hydroxypyruvate reductase (306 aa).

Residues 152 to 153, aspartate 172, 228 to 230, and aspartate 254 contribute to the NAD(+) site; these read NI and TAR. Residue arginine 230 is part of the active site. Residue glutamate 259 is part of the active site. Histidine 280 (proton donor) is an active-site residue. Position 280-283 (280-283) interacts with NAD(+); sequence HIGA.

This sequence belongs to the D-isomer specific 2-hydroxyacid dehydrogenase family.

The enzyme catalyses (R)-glycerate + NAD(+) = 3-hydroxypyruvate + NADH + H(+). The catalysed reaction is (R)-glycerate + NADP(+) = 3-hydroxypyruvate + NADPH + H(+). Involved in the degradation of L-serine via 3-hydroxypyruvate. Catalyzes the non-reversible reduction of 3-hydroxypyruvate to yield D-glycerate. The sequence is that of Hydroxypyruvate reductase from Thermotoga maritima (strain ATCC 43589 / DSM 3109 / JCM 10099 / NBRC 100826 / MSB8).